The sequence spans 134 residues: Putative nickel-responsive regulator (134 aa).

The Ni(2+) site is built by H78, H89, H91, and C97.

This sequence belongs to the transcriptional regulatory CopG/NikR family. Ni(2+) is required as a cofactor.

Transcriptional regulator. This Chlorobium limicola (strain DSM 245 / NBRC 103803 / 6330) protein is Putative nickel-responsive regulator.